A 241-amino-acid chain; its full sequence is Uridylate kinase (241 aa).

12-15 contacts ATP; it reads KISG. The segment at 20–25 is involved in allosteric activation by GTP; that stretch reads GEKGTG. Residue Gly54 coordinates UMP. ATP is bound by residues Gly55 and Arg59. UMP is bound by residues Asp74 and 135–142; that span reads TGNPYFST. ATP is bound by residues Asn163, Tyr169, and Asp172.

Belongs to the UMP kinase family. In terms of assembly, homohexamer.

Its subcellular location is the cytoplasm. It carries out the reaction UMP + ATP = UDP + ADP. The protein operates within pyrimidine metabolism; CTP biosynthesis via de novo pathway; UDP from UMP (UMPK route): step 1/1. With respect to regulation, allosterically activated by GTP. Inhibited by UTP. In terms of biological role, catalyzes the reversible phosphorylation of UMP to UDP. The chain is Uridylate kinase from Lactobacillus delbrueckii subsp. bulgaricus (strain ATCC 11842 / DSM 20081 / BCRC 10696 / JCM 1002 / NBRC 13953 / NCIMB 11778 / NCTC 12712 / WDCM 00102 / Lb 14).